We begin with the raw amino-acid sequence, 58 residues long: Metallothionein (58 aa).

The tract at residues 1 to 29 is beta; the sequence is MPGPCCNDVCECAAGGCKTGCVCTSCRCS. A divalent metal cation contacts are provided by C5, C6, C10, C12, C17, C21, C23, C26, C28, C31, C34, C38, C40, C46, C50, C54, C56, and C57. An alpha region spans residues 30-58; that stretch reads PCDKCTSGCKCPSKEECAKTCSKPCECCP.

In terms of biological role, metallothioneins have a high content of cysteine residues that bind various heavy metals. Class I MTS in crustacea are involved in the sequestration of elevated levels of heavy-metal ions. The polypeptide is Metallothionein (Astacus astacus (Noble crayfish)).